Here is a 333-residue protein sequence, read N- to C-terminus: Glycerol-3-phosphate dehydrogenase [NAD(P)+] (333 aa).

NADPH is bound by residues Ser13, Trp14, Arg34, and Lys108. 3 residues coordinate sn-glycerol 3-phosphate: Lys108, Gly137, and Ser139. Ala141 provides a ligand contact to NADPH. Sn-glycerol 3-phosphate-binding residues include Lys192, Asp245, Ser255, Arg256, and Asn257. Lys192 functions as the Proton acceptor in the catalytic mechanism. Arg256 contacts NADPH. Position 282 (Glu282) interacts with NADPH.

This sequence belongs to the NAD-dependent glycerol-3-phosphate dehydrogenase family.

It is found in the cytoplasm. It carries out the reaction sn-glycerol 3-phosphate + NAD(+) = dihydroxyacetone phosphate + NADH + H(+). The enzyme catalyses sn-glycerol 3-phosphate + NADP(+) = dihydroxyacetone phosphate + NADPH + H(+). It functions in the pathway membrane lipid metabolism; glycerophospholipid metabolism. Functionally, catalyzes the reduction of the glycolytic intermediate dihydroxyacetone phosphate (DHAP) to sn-glycerol 3-phosphate (G3P), the key precursor for phospholipid synthesis. The sequence is that of Glycerol-3-phosphate dehydrogenase [NAD(P)+] from Thioalkalivibrio sulfidiphilus (strain HL-EbGR7).